Here is a 326-residue protein sequence, read N- to C-terminus: 4-hydroxythreonine-4-phosphate dehydrogenase (326 aa).

Positions 133 and 134 each coordinate substrate. 3 residues coordinate a divalent metal cation: histidine 163, histidine 208, and histidine 263. Substrate is bound by residues lysine 271, asparagine 280, and arginine 289.

It belongs to the PdxA family. In terms of assembly, homodimer. Requires Zn(2+) as cofactor. Mg(2+) serves as cofactor. Co(2+) is required as a cofactor.

It localises to the cytoplasm. It carries out the reaction 4-(phosphooxy)-L-threonine + NAD(+) = 3-amino-2-oxopropyl phosphate + CO2 + NADH. Its pathway is cofactor biosynthesis; pyridoxine 5'-phosphate biosynthesis; pyridoxine 5'-phosphate from D-erythrose 4-phosphate: step 4/5. In terms of biological role, catalyzes the NAD(P)-dependent oxidation of 4-(phosphooxy)-L-threonine (HTP) into 2-amino-3-oxo-4-(phosphooxy)butyric acid which spontaneously decarboxylates to form 3-amino-2-oxopropyl phosphate (AHAP). This chain is 4-hydroxythreonine-4-phosphate dehydrogenase, found in Pseudoalteromonas atlantica (strain T6c / ATCC BAA-1087).